Here is a 555-residue protein sequence, read N- to C-terminus: Glutamate--tRNA ligase (555 aa).

The 'HIGH' region signature appears at 100 to 110; it reads PNPSGPLHIGH.

It belongs to the class-I aminoacyl-tRNA synthetase family. Glutamate--tRNA ligase type 2 subfamily.

The protein localises to the cytoplasm. The enzyme catalyses tRNA(Glu) + L-glutamate + ATP = L-glutamyl-tRNA(Glu) + AMP + diphosphate. Catalyzes the attachment of glutamate to tRNA(Glu) in a two-step reaction: glutamate is first activated by ATP to form Glu-AMP and then transferred to the acceptor end of tRNA(Glu). The chain is Glutamate--tRNA ligase from Methanococcus maripaludis (strain DSM 14266 / JCM 13030 / NBRC 101832 / S2 / LL).